Reading from the N-terminus, the 138-residue chain is Putative pre-16S rRNA nuclease (138 aa).

The protein belongs to the YqgF nuclease family.

It is found in the cytoplasm. Functionally, could be a nuclease involved in processing of the 5'-end of pre-16S rRNA. This Flavobacterium johnsoniae (strain ATCC 17061 / DSM 2064 / JCM 8514 / BCRC 14874 / CCUG 350202 / NBRC 14942 / NCIMB 11054 / UW101) (Cytophaga johnsonae) protein is Putative pre-16S rRNA nuclease.